A 186-amino-acid polypeptide reads, in one-letter code: Peptidyl-tRNA hydrolase (186 aa).

Y13 provides a ligand contact to tRNA. H18 (proton acceptor) is an active-site residue. Positions 59, 61, and 107 each coordinate tRNA.

Belongs to the PTH family. Monomer.

Its subcellular location is the cytoplasm. The catalysed reaction is an N-acyl-L-alpha-aminoacyl-tRNA + H2O = an N-acyl-L-amino acid + a tRNA + H(+). In terms of biological role, hydrolyzes ribosome-free peptidyl-tRNAs (with 1 or more amino acids incorporated), which drop off the ribosome during protein synthesis, or as a result of ribosome stalling. Functionally, catalyzes the release of premature peptidyl moieties from peptidyl-tRNA molecules trapped in stalled 50S ribosomal subunits, and thus maintains levels of free tRNAs and 50S ribosomes. The chain is Peptidyl-tRNA hydrolase from Thermotoga petrophila (strain ATCC BAA-488 / DSM 13995 / JCM 10881 / RKU-1).